Reading from the N-terminus, the 337-residue chain is Glyceraldehyde-3-phosphate dehydrogenase (337 aa).

NAD(+) contacts are provided by residues 17-18 (RI), D39, K83, and S125. Residues 156-158 (SCT), T187, R202, 215-216 (TG), and R238 each bind D-glyceraldehyde 3-phosphate. The Nucleophile role is filled by C157. N319 provides a ligand contact to NAD(+).

It belongs to the glyceraldehyde-3-phosphate dehydrogenase family. In terms of assembly, homotetramer.

The protein resides in the cytoplasm. The catalysed reaction is D-glyceraldehyde 3-phosphate + phosphate + NAD(+) = (2R)-3-phospho-glyceroyl phosphate + NADH + H(+). The protein operates within carbohydrate degradation; glycolysis; pyruvate from D-glyceraldehyde 3-phosphate: step 1/5. In terms of biological role, catalyzes the oxidative phosphorylation of glyceraldehyde 3-phosphate (G3P) to 1,3-bisphosphoglycerate (BPG) using the cofactor NAD. The first reaction step involves the formation of a hemiacetal intermediate between G3P and a cysteine residue, and this hemiacetal intermediate is then oxidized to a thioester, with concomitant reduction of NAD to NADH. The reduced NADH is then exchanged with the second NAD, and the thioester is attacked by a nucleophilic inorganic phosphate to produce BPG. The protein is Glyceraldehyde-3-phosphate dehydrogenase (gapA) of Mycoplasma pneumoniae (strain ATCC 29342 / M129 / Subtype 1) (Mycoplasmoides pneumoniae).